A 310-amino-acid polypeptide reads, in one-letter code: HPr kinase/phosphorylase (310 aa).

Residues histidine 138 and lysine 159 contribute to the active site. An ATP-binding site is contributed by 153-160 (GASGIGKS). A Mg(2+)-binding site is contributed by serine 160. Aspartate 177 acts as the Proton acceptor; for phosphorylation activity. Proton donor; for dephosphorylation activity in catalysis. Residues 201-210 (IEIRGVGIID) form an important for the catalytic mechanism of both phosphorylation and dephosphorylation region. Glutamate 202 serves as a coordination point for Mg(2+). Residue arginine 243 is part of the active site. The interval 264–269 (PVKTGR) is important for the catalytic mechanism of dephosphorylation.

It belongs to the HPrK/P family. In terms of assembly, homohexamer. Mg(2+) serves as cofactor.

It catalyses the reaction [HPr protein]-L-serine + ATP = [HPr protein]-O-phospho-L-serine + ADP + H(+). The catalysed reaction is [HPr protein]-O-phospho-L-serine + phosphate + H(+) = [HPr protein]-L-serine + diphosphate. Its function is as follows. Catalyzes the ATP- as well as the pyrophosphate-dependent phosphorylation of a specific serine residue in HPr, a phosphocarrier protein of the phosphoenolpyruvate-dependent sugar phosphotransferase system (PTS). HprK/P also catalyzes the pyrophosphate-producing, inorganic phosphate-dependent dephosphorylation (phosphorolysis) of seryl-phosphorylated HPr (P-Ser-HPr). The two antagonistic activities of HprK/P are regulated by several intracellular metabolites, which change their concentration in response to the absence or presence of rapidly metabolisable carbon sources (glucose, fructose, etc.) in the growth medium. Therefore, by controlling the phosphorylation state of HPr, HPrK/P is a sensor enzyme that plays a major role in the regulation of carbon metabolism and sugar transport: it mediates carbon catabolite repression (CCR), and regulates PTS-catalyzed carbohydrate uptake and inducer exclusion. The chain is HPr kinase/phosphorylase from Lactococcus lactis subsp. cremoris (strain SK11).